A 430-amino-acid chain; its full sequence is Histidinol dehydrogenase (430 aa).

Positions 130, 191, and 214 each coordinate NAD(+). Substrate contacts are provided by Ser-237, Gln-259, and His-262. The Zn(2+) site is built by Gln-259 and His-262. Active-site proton acceptor residues include Glu-327 and His-328. Residues His-328, Asp-361, Glu-415, and His-420 each contribute to the substrate site. Asp-361 is a Zn(2+) binding site. His-420 lines the Zn(2+) pocket.

The protein belongs to the histidinol dehydrogenase family. Zn(2+) serves as cofactor.

The catalysed reaction is L-histidinol + 2 NAD(+) + H2O = L-histidine + 2 NADH + 3 H(+). It functions in the pathway amino-acid biosynthesis; L-histidine biosynthesis; L-histidine from 5-phospho-alpha-D-ribose 1-diphosphate: step 9/9. Functionally, catalyzes the sequential NAD-dependent oxidations of L-histidinol to L-histidinaldehyde and then to L-histidine. The chain is Histidinol dehydrogenase from Brucella suis biovar 1 (strain 1330).